A 250-amino-acid chain; its full sequence is Aquaporin TIP2-2 (250 aa).

A run of 2 helical transmembrane segments spans residues 22 to 42 and 54 to 74; these read VAEF…AIAF and AGLV…VSVA. Positions 83 to 85 match the NPA 1 motif; that stretch reads NPA. The next 3 helical transmembrane spans lie at 97 to 119, 142 to 162, and 169 to 189; these read TVLT…CLLL, GVVF…ATAA, and LGTI…LAAG. An NPA 2 motif is present at residues 197 to 199; the sequence is NPA. The chain crosses the membrane as a helical span at residues 218–238; it reads WVGPLIGGGLAGLVYGDVFIG.

It belongs to the MIP/aquaporin (TC 1.A.8) family. TIP (TC 1.A.8.10) subfamily.

The protein localises to the vacuole membrane. Its function is as follows. Aquaporins facilitate the transport of water and small neutral solutes across cell membranes. This chain is Aquaporin TIP2-2 (TIP2-2), found in Zea mays (Maize).